The sequence spans 533 residues: Undecaprenyl phosphate-alpha-4-amino-4-deoxy-L-arabinose arabinosyl transferase (533 aa).

Helical transmembrane passes span leucine 10–isoleucine 30, proline 64–valine 84, isoleucine 86–isoleucine 106, serine 113–serine 133, proline 137–isoleucine 157, valine 170–isoleucine 190, phenylalanine 207–histidine 227, tryptophan 257–valine 277, aspartate 290–glycine 310, leucine 312–valine 332, valine 345–glutamine 365, histidine 377–isoleucine 397, and phenylalanine 402–proline 422.

Belongs to the glycosyltransferase 83 family.

The protein localises to the cell inner membrane. The catalysed reaction is 4-amino-4-deoxy-alpha-L-arabinopyranosyl di-trans,octa-cis-undecaprenyl phosphate + lipid IVA = lipid IIA + di-trans,octa-cis-undecaprenyl phosphate.. The protein operates within lipopolysaccharide metabolism; 4-amino-4-deoxy-beta-L-arabinose-lipid A biosynthesis. Functionally, catalyzes the transfer of the L-Ara4N moiety of the glycolipid undecaprenyl phosphate-alpha-L-Ara4N to lipid A. The modified arabinose is attached to lipid A and is required for resistance to polymyxin and cationic antimicrobial peptides. The protein is Undecaprenyl phosphate-alpha-4-amino-4-deoxy-L-arabinose arabinosyl transferase of Pseudomonas savastanoi pv. phaseolicola (strain 1448A / Race 6) (Pseudomonas syringae pv. phaseolicola (strain 1448A / Race 6)).